A 354-amino-acid polypeptide reads, in one-letter code: Methionine import ATP-binding protein MetN (354 aa).

The 243-residue stretch at 8–250 (LDHIDITFRQ…PKEALTQEFI (243 aa)) folds into the ABC transporter domain. 42-49 (GYSGAGKS) is a binding site for ATP.

It belongs to the ABC transporter superfamily. Methionine importer (TC 3.A.1.24) family. In terms of assembly, the complex is composed of two ATP-binding proteins (MetN), two transmembrane proteins (MetI) and a solute-binding protein (MetQ).

Its subcellular location is the cell membrane. It catalyses the reaction L-methionine(out) + ATP + H2O = L-methionine(in) + ADP + phosphate + H(+). The enzyme catalyses D-methionine(out) + ATP + H2O = D-methionine(in) + ADP + phosphate + H(+). Part of the ABC transporter complex MetNIQ involved in methionine import. Responsible for energy coupling to the transport system. The chain is Methionine import ATP-binding protein MetN from Streptococcus pyogenes serotype M12 (strain MGAS2096).